A 249-amino-acid polypeptide reads, in one-letter code: 2,3-bisphosphoglycerate-dependent phosphoglycerate mutase (249 aa).

Residues 11–18 (RHGNSEWN), 24–25 (TG), arginine 63, 90–93 (ERHY), lysine 101, 117–118 (RR), and 185–186 (GN) contribute to the substrate site. The Tele-phosphohistidine intermediate role is filled by histidine 12. The Proton donor/acceptor role is filled by glutamate 90.

This sequence belongs to the phosphoglycerate mutase family. BPG-dependent PGAM subfamily.

The enzyme catalyses (2R)-2-phosphoglycerate = (2R)-3-phosphoglycerate. Its pathway is carbohydrate degradation; glycolysis; pyruvate from D-glyceraldehyde 3-phosphate: step 3/5. Functionally, catalyzes the interconversion of 2-phosphoglycerate and 3-phosphoglycerate. In Leifsonia xyli subsp. xyli (strain CTCB07), this protein is 2,3-bisphosphoglycerate-dependent phosphoglycerate mutase.